Reading from the N-terminus, the 384-residue chain is Eukaryotic translation initiation factor 3 subunit M (384 aa).

One can recognise a PCI domain in the interval 184–346; it reads ENRKAIEAMI…KKILITGAFP (163 aa).

The protein belongs to the eIF-3 subunit M family. As to quaternary structure, component of the eukaryotic translation initiation factor 3 (eIF-3) complex.

Its subcellular location is the cytoplasm. Its function is as follows. Component of the eukaryotic translation initiation factor 3 (eIF-3) complex, which is involved in protein synthesis of a specialized repertoire of mRNAs and, together with other initiation factors, stimulates binding of mRNA and methionyl-tRNAi to the 40S ribosome. The eIF-3 complex specifically targets and initiates translation of a subset of mRNAs involved in cell proliferation. The chain is Eukaryotic translation initiation factor 3 subunit M from Schistosoma japonicum (Blood fluke).